The chain runs to 253 residues: 3-deoxy-manno-octulosonate cytidylyltransferase (253 aa).

It belongs to the KdsB family.

It is found in the cytoplasm. The enzyme catalyses 3-deoxy-alpha-D-manno-oct-2-ulosonate + CTP = CMP-3-deoxy-beta-D-manno-octulosonate + diphosphate. The protein operates within nucleotide-sugar biosynthesis; CMP-3-deoxy-D-manno-octulosonate biosynthesis; CMP-3-deoxy-D-manno-octulosonate from 3-deoxy-D-manno-octulosonate and CTP: step 1/1. It participates in bacterial outer membrane biogenesis; lipopolysaccharide biosynthesis. Functionally, activates KDO (a required 8-carbon sugar) for incorporation into bacterial lipopolysaccharide in Gram-negative bacteria. In Acinetobacter baumannii (strain ATCC 17978 / DSM 105126 / CIP 53.77 / LMG 1025 / NCDC KC755 / 5377), this protein is 3-deoxy-manno-octulosonate cytidylyltransferase.